We begin with the raw amino-acid sequence, 307 residues long: Deaminated glutathione amidase, chloroplastic/cytosolic (307 aa).

A chloroplast-targeting transit peptide spans 1 to 36; it reads MNAYSVSLDFTKPSLFTRITLSSQIPLTMATTVNKT. The CN hydrolase domain occupies 37–286; it reads VRVAAAQMTS…TGIVVADIDF (250 aa). The Proton acceptor role is filled by glutamate 76. Lysine 147 functions as the Proton donor in the catalytic mechanism. Cysteine 188 functions as the Nucleophile in the catalytic mechanism.

This sequence belongs to the nitrilase superfamily. NIT1/NIT2 family.

It localises to the plastid. Its subcellular location is the chloroplast. The protein resides in the cytoplasm. The catalysed reaction is N-(4-oxoglutaryl)-L-cysteinylglycine + H2O = L-cysteinylglycine + 2-oxoglutarate. The enzyme catalyses N-(4-carboxy-4-oxobutanoyl)-L-ethylglycylglycine + H2O = N-(2-aminobutanoyl)glycine + 2-oxoglutarate. Its function is as follows. Catalyzes the hydrolysis of the amide bond in N-(4-oxoglutarate)-L-cysteinylglycine (deaminated glutathione), a metabolite repair reaction to dispose of the harmful deaminated glutathione. Possesses amidase activity toward deaminated ophthalmate in vitro. This Arabidopsis thaliana (Mouse-ear cress) protein is Deaminated glutathione amidase, chloroplastic/cytosolic.